The following is a 748-amino-acid chain: Disintegrin and metalloproteinase domain-containing protein 10 (748 aa).

The signal sequence occupies residues 1–19; sequence MVLLRVLILLLSWAAGMGG. A propeptide spanning residues 20 to 213 is cleaved from the precursor; it reads QYGNPLNKYI…NGPELLRKKR (194 aa). At 20–672 the chain is on the extracellular side; the sequence is QYGNPLNKYI…SPELYENIAE (653 aa). The Cysteine switch motif lies at 171–178; the sequence is GGCADHSV. Cys173 is a Zn(2+) binding site. The Peptidase M12B domain maps to 220–456; sequence NTCQLYIQTD…KRNNCFVESG (237 aa). 17 disulfides stabilise this stretch: Cys222-Cys313, Cys344-Cys451, Cys399-Cys435, Cys460-Cys495, Cys471-Cys484, Cys473-Cys479, Cys483-Cys515, Cys503-Cys511, Cys510-Cys536, Cys524-Cys543, Cys530-Cys562, Cys555-Cys567, Cys572-Cys598, Cys580-Cys607, Cys582-Cys597, Cys594-Cys639, and Cys632-Cys645. 2 N-linked (GlcNAc...) asparagine glycosylation sites follow: Asn267 and Asn278. His383 provides a ligand contact to Zn(2+). Residue Glu384 is part of the active site. Residues His387 and His393 each contribute to the Zn(2+) site. Asn439 carries N-linked (GlcNAc...) asparagine glycosylation. The 95-residue stretch at 457 to 551 folds into the Disintegrin domain; that stretch reads QPICGNGMVE…LCPASDPKPN (95 aa). Asn551 carries an N-linked (GlcNAc...) asparagine glycan. Residues 673 to 693 form a helical membrane-spanning segment; it reads WIVAHWWAVLLMGIALIMLMA. Residues 694–748 are Cytoplasmic-facing; sequence GFIKICSVHTPSSNPKLPPPKPLPGTLKRRRPPQPIQQPQRQRPRESYQMGHMRR. The tract at residues 704-748 is disordered; sequence PSSNPKLPPPKPLPGTLKRRRPPQPIQQPQRQRPRESYQMGHMRR. The SH3-binding signature appears at 708 to 715; that stretch reads PKLPPPKP. Thr719 is modified (phosphothreonine; by FAM20C). Positions 722 to 728 match the SH3-binding motif; sequence RRRPPQP. Positions 734–748 are interaction with AP2A1, AP2A2 and AP2M1; sequence RQRPRESYQMGHMRR.

In terms of assembly, forms a ternary EFNA5-EPHA3-ADAM10 complex mediating EFNA5 extracellular domain shedding by ADAM10 which regulates the EFNA5-EPHA3 complex internalization and function, the cleavage occurs in trans, with ADAM10 and its substrate being on the membranes of opposing cells. Interacts with the clathrin adapter AP2 complex subunits AP2A1, AP2A2, AP2B1, and AP2M1; this interaction facilitates ADAM10 endocytosis from the plasma membrane during long-term potentiation in hippocampal neurons. Forms a ternary complex composed of ADAM10, EPHA4 and CADH1; within the complex, ADAM10 cleaves CADH1 which disrupts adherens junctions. Interacts with EPHA2. Interacts with NGF in a divalent cation-dependent manner. Interacts with TSPAN14; the interaction promotes ADAM10 maturation and cell surface expression. Interacts with TSPAN5, TSPAN10, TSPAN14, TSPAN15, TSPAN17 and TSPAN33; these interactions regulate ADAM10 substrate specificity, endocytosis and turnover. Interacts (via extracellular domain) with TSPAN33 (via extracellular domain) and (via cytoplasmic domain) with AFDN; interaction with TSPAN33 allows the docking of ADAM10 to zonula adherens through a PDZ11-dependent interaction between TSPAN33 and PLEKHA7 while interaction with AFDN locks ADAM10 at zonula adherens. Interacts with DLG1; this interaction recruits ADAM10 to the cell membrane during long-term depression in hippocampal neurons. Interacts (via extracellular domain) with BACE1 (via extracellular domain). Interacts with FAM171A1. As to quaternary structure, (Microbial infection) Interacts with S.aureus hly; this interaction is necessary for toxin pore formation, disruption of focal adhesions and S.aureus hly-mediated cytotoxicity. Zn(2+) serves as cofactor. In terms of processing, the precursor is cleaved by furin and PCSK7. As to expression, expressed in the brain (at protein level). Expressed in spleen, lymph node, thymus, peripheral blood leukocyte, bone marrow, cartilage, chondrocytes and fetal liver.

It is found in the cell membrane. It localises to the golgi apparatus membrane. The protein localises to the cytoplasmic vesicle. The protein resides in the clathrin-coated vesicle. Its subcellular location is the cell projection. It is found in the axon. It localises to the dendrite. The protein localises to the cell junction. The protein resides in the adherens junction. Its subcellular location is the cytoplasm. It catalyses the reaction Endopeptidase of broad specificity.. Its activity is regulated as follows. Catalytically inactive when the propeptide is intact and associated with the mature enzyme. The disintegrin and cysteine-rich regions modulate access of substrates to exerts an inhibitory effect on the cleavage of ADAM10 substrates. Its function is as follows. Transmembrane metalloprotease which mediates the ectodomain shedding of a myriad of transmembrane proteins, including adhesion proteins, growth factor precursors and cytokines being essential for development and tissue homeostasis. Associates with six members of the tetraspanin superfamily TspanC8 which regulate its exit from the endoplasmic reticulum and its substrate selectivity. Cleaves the membrane-bound precursor of TNF-alpha at '76-Ala-|-Val-77' to its mature soluble form. Responsible for the proteolytical release of soluble JAM3 from endothelial cells surface. Responsible for the proteolytic release of several other cell-surface proteins, including heparin-binding epidermal growth-like factor, ephrin-A2, CD44, CDH2 and for constitutive and regulated alpha-secretase cleavage of amyloid precursor protein (APP). Contributes to the normal cleavage of the cellular prion protein. Involved in the cleavage of the adhesion molecule L1 at the cell surface and in released membrane vesicles, suggesting a vesicle-based protease activity. Also controls the proteolytic processing of Notch and mediates lateral inhibition during neurogenesis. Required for the development of type 1 transitional B cells into marginal zone B cells, probably by cleaving Notch. Responsible for the FasL ectodomain shedding and for the generation of the remnant ADAM10-processed FasL (FasL APL) transmembrane form. Also cleaves the ectodomain of the integral membrane proteins CORIN and ITM2B. Mediates the proteolytic cleavage of LAG3, leading to release the secreted form of LAG3. Mediates the proteolytic cleavage of IL6R and IL11RA, leading to the release of secreted forms of IL6R and IL11RA. Enhances the cleavage of CHL1 by BACE1. Cleaves NRCAM. Cleaves TREM2, resulting in shedding of the TREM2 ectodomain. Involved in the development and maturation of glomerular and coronary vasculature. During development of the cochlear organ of Corti, promotes pillar cell separation by forming a ternary complex with CADH1 and EPHA4 and cleaving CADH1 at adherens junctions. May regulate the EFNA5-EPHA3 signaling. Regulates leukocyte transmigration as a sheddase for the adherens junction protein VE-cadherin/CDH5 in endothelial cells. Functionally, (Microbial infection) Promotes the cytotoxic activity of S.aureus hly by binding to the toxin at zonula adherens and promoting formation of toxin pores. The sequence is that of Disintegrin and metalloproteinase domain-containing protein 10 from Homo sapiens (Human).